We begin with the raw amino-acid sequence, 260 residues long: Tropinone reductase 2 (260 aa).

18–41 (SRGIGYGIVEELASLGASVYTCSR) serves as a coordination point for NADP(+). S146 serves as a coordination point for substrate. Y159 acts as the Proton acceptor in catalysis. 192–196 (IATSL) contacts NADP(+).

The protein belongs to the short-chain dehydrogenases/reductases (SDR) family. Homodimer.

It carries out the reaction pseudotropine + NADP(+) = tropinone + NADPH + H(+). Its pathway is alkaloid biosynthesis; tropane alkaloid biosynthesis. Catalyzes the stereospecific reduction of tropinone to pseudotropine. The chain is Tropinone reductase 2 (TR2) from Datura stramonium (Jimsonweed).